We begin with the raw amino-acid sequence, 404 residues long: Tryptophan synthase beta chain (404 aa).

N6-(pyridoxal phosphate)lysine is present on Lys98.

This sequence belongs to the TrpB family. As to quaternary structure, tetramer of two alpha and two beta chains. The cofactor is pyridoxal 5'-phosphate.

It catalyses the reaction (1S,2R)-1-C-(indol-3-yl)glycerol 3-phosphate + L-serine = D-glyceraldehyde 3-phosphate + L-tryptophan + H2O. The protein operates within amino-acid biosynthesis; L-tryptophan biosynthesis; L-tryptophan from chorismate: step 5/5. In terms of biological role, the beta subunit is responsible for the synthesis of L-tryptophan from indole and L-serine. This Rhodopseudomonas palustris (strain BisB18) protein is Tryptophan synthase beta chain.